The primary structure comprises 323 residues: Voltage-dependent calcium channel gamma-2 subunit (323 aa).

The helical transmembrane segment at 10–30 threads the bilayer; that stretch reads MLLTTVGAFAAFSLMTIAVGT. N-linked (GlcNAc...) asparagine glycosylation is present at asparagine 48. 3 helical membrane-spanning segments follow: residues 104 to 124, 134 to 154, and 182 to 202; these read SSIF…CIAA, IILS…IGII, and FGAL…HMFI. The tract at residues 233 to 261 is disordered; the sequence is YQRRSRSSSRSTEPSHSRDASPVGIKGFN. Serine 253 bears the Phosphoserine mark. Tyrosine 271 carries the phosphotyrosine modification. Position 321 is a phosphothreonine (threonine 321).

Belongs to the PMP-22/EMP/MP20 family. CACNG subfamily. The L-type calcium channel is composed of five subunits: alpha-1, alpha-2/delta, beta and gamma. Interacts with the PDZ domains of DLG4/PSD-95 and DLG1/SAP97. May interact with GOPC. Acts as an auxiliary subunit for AMPA-selective glutamate receptors (AMPARs). Found in a complex with GRIA1, GRIA2, GRIA3, GRIA4, CNIH2, CNIH3, CACNG3, CACNG4, CACNG5, CACNG7 and CACNG8. Interacts with GRIA1 and GRIA2. Interacts with MPP2. Post-translationally, phosphorylation of Thr-321 impairs interaction with DLG1 and DLG4. In terms of tissue distribution, brain.

The protein resides in the membrane. The protein localises to the synapse. It is found in the synaptosome. Its function is as follows. Regulates the trafficking and gating properties of AMPA-selective glutamate receptors (AMPARs). Promotes their targeting to the cell membrane and synapses and modulates their gating properties by slowing their rates of activation, deactivation and desensitization. Does not show subunit-specific AMPA receptor regulation and regulates all AMPAR subunits. Thought to stabilize the calcium channel in an inactivated (closed) state. This chain is Voltage-dependent calcium channel gamma-2 subunit (CACNG2), found in Homo sapiens (Human).